The sequence spans 416 residues: N-acetyl-L-cysteine deacetylase (416 aa).

Residues C128, H130, E164, H188, and H380 each contribute to the Zn(2+) site.

The protein belongs to the peptidase M20 family. It depends on Zn(2+) as a cofactor. Co(2+) is required as a cofactor.

The enzyme catalyses N-acetyl-L-cysteine + H2O = L-cysteine + acetate. It participates in amino-acid metabolism. Its function is as follows. Involved in a cysteine salvage pathway from S-alkylcysteine. Catalyzes the last step in this pathway, i.e. the deacetylation of N-acetyl-L-cysteine. This pathway is likely important in the catabolism of alkylated cysteine generated by proteolysis of alkylated glutathione formed in the detoxification of a wide range of electrophiles. This chain is N-acetyl-L-cysteine deacetylase, found in Bacillus subtilis (strain 168).